Reading from the N-terminus, the 177-residue chain is Interleukin-1 receptor antagonist protein (177 aa).

Residues 1–25 form the signal peptide; that stretch reads MEIRRRSVRHLISLLLFLFYSETAC. Residues cysteine 91 and cysteine 141 are joined by a disulfide bond. A glycan (N-linked (GlcNAc...) asparagine) is linked at asparagine 109.

This sequence belongs to the IL-1 family.

Its subcellular location is the secreted. Functionally, anti-inflammatory antagonist of interleukin-1 family of proinflammatory cytokines such as interleukin-1beta/IL1B and interleukin-1alpha/IL1A. Protects from immune dysregulation and uncontrolled systemic inflammation triggered by IL1 for a range of innate stimulatory agents such as pathogens. The polypeptide is Interleukin-1 receptor antagonist protein (IL1RN) (Equus caballus (Horse)).